A 116-amino-acid polypeptide reads, in one-letter code: Small ribosomal subunit protein eS24 (116 aa).

A disordered region spans residues 81–116 (IEPEHMVERHKKVLEELESESEESEESESEESEEEE). The span at 96–116 (ELESESEESEESESEESEEEE) shows a compositional bias: acidic residues.

It belongs to the eukaryotic ribosomal protein eS24 family.

This is Small ribosomal subunit protein eS24 from Methanopyrus kandleri (strain AV19 / DSM 6324 / JCM 9639 / NBRC 100938).